Consider the following 445-residue polypeptide: Trigger factor (445 aa).

A PPIase FKBP-type domain is found at 163-248 (GDTVVIDYVG…IHEVKVKELP (86 aa)). Positions 425–445 (KEVESAKDDADKEASDAKADK) are disordered.

This sequence belongs to the FKBP-type PPIase family. Tig subfamily.

The protein resides in the cytoplasm. The catalysed reaction is [protein]-peptidylproline (omega=180) = [protein]-peptidylproline (omega=0). Functionally, involved in protein export. Acts as a chaperone by maintaining the newly synthesized protein in an open conformation. Functions as a peptidyl-prolyl cis-trans isomerase. This chain is Trigger factor, found in Lacticaseibacillus casei (strain BL23) (Lactobacillus casei).